The primary structure comprises 605 residues: Proline--tRNA ligase (605 aa).

This sequence belongs to the class-II aminoacyl-tRNA synthetase family. ProS type 1 subfamily. In terms of assembly, homodimer.

Its subcellular location is the cytoplasm. It catalyses the reaction tRNA(Pro) + L-proline + ATP = L-prolyl-tRNA(Pro) + AMP + diphosphate. Functionally, catalyzes the attachment of proline to tRNA(Pro) in a two-step reaction: proline is first activated by ATP to form Pro-AMP and then transferred to the acceptor end of tRNA(Pro). As ProRS can inadvertently accommodate and process non-cognate amino acids such as alanine and cysteine, to avoid such errors it has two additional distinct editing activities against alanine. One activity is designated as 'pretransfer' editing and involves the tRNA(Pro)-independent hydrolysis of activated Ala-AMP. The other activity is designated 'posttransfer' editing and involves deacylation of mischarged Ala-tRNA(Pro). The misacylated Cys-tRNA(Pro) is not edited by ProRS. This is Proline--tRNA ligase from Bifidobacterium adolescentis (strain ATCC 15703 / DSM 20083 / NCTC 11814 / E194a).